The chain runs to 408 residues: Cytochrome P450 55A3 (408 aa).

Cys-357 is a binding site for heme.

It belongs to the cytochrome P450 family. It depends on heme as a cofactor.

The polypeptide is Cytochrome P450 55A3 (CYP55A3) (Fusarium lichenicola (Cylindrocarpon lichenicola)).